Consider the following 100-residue polypeptide: Urease subunit gamma (100 aa).

It belongs to the urease gamma subunit family. Heterotrimer of UreA (gamma), UreB (beta) and UreC (alpha) subunits. Three heterotrimers associate to form the active enzyme.

The protein resides in the cytoplasm. The catalysed reaction is urea + 2 H2O + H(+) = hydrogencarbonate + 2 NH4(+). Its pathway is nitrogen metabolism; urea degradation; CO(2) and NH(3) from urea (urease route): step 1/1. The protein is Urease subunit gamma of Mesorhizobium japonicum (strain LMG 29417 / CECT 9101 / MAFF 303099) (Mesorhizobium loti (strain MAFF 303099)).